The sequence spans 760 residues: MNRKNVTRTITAIAVVVLLGWSFFYFSDDTRGYKPVDTSVAITQINGDNVKSAQIDDREQQLRLILKKGNNETDGSEKVITKYPTGYAVDLFNALSAKNAKVSTVVNQGSILGELLVYVLPLLLLVGLFVMFSRMQGGARMGFGFGKSRAKQLSKDMPKTTFADVAGVDEAVEELYEIKDFLQNPSRYQALGAKIPKGVLLYGPPGTGKTLLARAVAGEAGVPFFTISGSDFVEMFVGVGASRVRDLFEQAKQNSPCIIFVDEIDAVGRQRGAGLGGGHDEREQTLNQLLVEMDGFGDRAGVILIAATNRPDILDPALLRPGRFDRQIPVSNPDLAGRRAVLRVHSKGKPMAADADLDGLAKRTVGMTGADLANVINEAALLTARENGTIITGPALEEAVDRVIGGPRRKGRIISEQEKKITAYHEGGHTLAAWAMPDIEPIYKVTILARGRTGGHAVAVPEEDKGLRTRSEMIAQLVFAMGGRAAEELVFREPTTGAVSDIEQATKIARSMVTEFGMSSKLGAVKYGSEHGDPFLGRTMGTQPDYSHEVAREIDEEVRKLIEAAHTEAWEILTEYRDVLDTLAGELLEKETLHRPELESIFADVEKRPRLTMFDDFGGRIPSDKPPIKTPGELAIERGEPWPQPVPEPAFKAAIAQATQAAEAARSDAGQTGHGANGSPAGTHRSGDRQYGSTQPDYGAPAGWHAPGWPPRSSHRPSYSGEPAPTYPGQPYPTGQADPGSDESSAEQDDEVSRTKPAHG.

At 1–5 (MNRKN) the chain is on the cytoplasmic side. A helical transmembrane segment spans residues 6-26 (VTRTITAIAVVVLLGWSFFYF). Residues 27–110 (SDDTRGYKPV…KVSTVVNQGS (84 aa)) are Extracellular-facing. Residues 111 to 131 (ILGELLVYVLPLLLLVGLFVM) form a helical membrane-spanning segment. The Cytoplasmic portion of the chain corresponds to 132–760 (FSRMQGGARM…EVSRTKPAHG (629 aa)). 203–210 (GPPGTGKT) provides a ligand contact to ATP. Zn(2+) is bound at residue His425. Glu426 is a catalytic residue. Zn(2+)-binding residues include His429 and Asp501. The disordered stretch occupies residues 616-760 (DFGGRIPSDK…EVSRTKPAHG (145 aa)). Low complexity predominate over residues 650-669 (AFKAAIAQATQAAEAARSDA). The segment covering 740-750 (GSDESSAEQDD) has biased composition (acidic residues).

This sequence in the central section; belongs to the AAA ATPase family. The protein in the C-terminal section; belongs to the peptidase M41 family. Homohexamer. The cofactor is Zn(2+).

The protein localises to the cell membrane. In terms of biological role, acts as a processive, ATP-dependent zinc metallopeptidase for both cytoplasmic and membrane proteins. Plays a role in the quality control of integral membrane proteins. This is ATP-dependent zinc metalloprotease FtsH from Mycobacterium tuberculosis (strain CDC 1551 / Oshkosh).